A 550-amino-acid chain; its full sequence is Flagellin (550 aa).

Belongs to the bacterial flagellin family.

The protein localises to the secreted. Its subcellular location is the bacterial flagellum. Its function is as follows. Flagellin is the subunit protein which polymerizes to form the filaments of bacterial flagella. This chain is Flagellin (fliC), found in Shigella flexneri.